We begin with the raw amino-acid sequence, 393 residues long: MTIADRWLLPDGMDEVLPPQATRMEQLRRALLDLYDRWGYDLVIPPTVEFLDSLLTGTGTDLDLQTFKLTDQLSGRMMGASADVTPQVARMDAHSLKRSGPARLCYCTTVLRAKADKHQGGRSPTQVGVELFGHAGLDADIEVVRLALTGLEVAGAGEVHLALGHIGIYRALVHAAALSAESEQALFEAIERKAFNDVDALVARDVSDPALVDMLQALPRLYGGQEVLDQAREVFAGAPPAVMAALDELQALCRAVTDNHLRAEVYLDLAELRGYLYHTGMVFAAYVPGYGQALAKGGRYDDTGRAFGRARPATGFSMDLKLLASLEESGPRCDGIWAPADERAGLEDAIARLRASGERVIQALPGQRVGPREQRCDRQLVESNGEWRVEPLA.

This sequence belongs to the class-II aminoacyl-tRNA synthetase family. HisZ subfamily. In terms of assembly, heteromultimer composed of HisG and HisZ subunits.

The protein resides in the cytoplasm. Its pathway is amino-acid biosynthesis; L-histidine biosynthesis; L-histidine from 5-phospho-alpha-D-ribose 1-diphosphate: step 1/9. Required for the first step of histidine biosynthesis. May allow the feedback regulation of ATP phosphoribosyltransferase activity by histidine. The protein is ATP phosphoribosyltransferase regulatory subunit of Chromohalobacter salexigens (strain ATCC BAA-138 / DSM 3043 / CIP 106854 / NCIMB 13768 / 1H11).